Consider the following 1182-residue polypeptide: Retrotransposable element SLACS 132 kDa protein (1182 aa).

Disordered stretches follow at residues 77 to 97 (GERS…PRER), 163 to 220 (DVLD…STDQ), 317 to 339 (RRKR…ALRL), and 418 to 478 (RTAR…STAP). Residues 163-174 (DVLDEEEQDDDL) are compositionally biased toward acidic residues. Basic and acidic residues predominate over residues 420–446 (ARREQQQQRGKDNQEEEDRQKKEEKSL). Polar residues predominate over residues 456-475 (SVRQGGQPSSSQPKRLNRWS). Positions 560–790 (NADVSMEVGR…TGDTGFGTAV (231 aa)) constitute a Reverse transcriptase domain.

The catalysed reaction is DNA(n) + a 2'-deoxyribonucleoside 5'-triphosphate = DNA(n+1) + diphosphate. The protein is Retrotransposable element SLACS 132 kDa protein of Trypanosoma brucei gambiense.